Here is a 363-residue protein sequence, read N- to C-terminus: 3-methyl-D-ornithine--L-lysine ligase (363 aa).

ATP is bound at residue Lys-10. Position 11-12 (11-12 (LQ)) interacts with L-lysine. Residues Asp-31, 49 to 50 (DV), and 72 to 73 (EN) contribute to the ATP site. An L-lysine-binding site is contributed by Glu-72. ADP-binding positions include Lys-104, Lys-131, Ser-138, and 160-163 (EEYV). Residues 169–171 (SLE) and Asp-225 each bind D-ornithine. Mg(2+) is bound by residues Glu-227, Glu-239, and Asp-241. An ADP-binding site is contributed by Glu-239. D-ornithine-binding positions include 243–248 (RFPSQT) and Glu-302. L-lysine is bound by residues Ser-246 and Glu-302.

This sequence belongs to the PylC family. Requires Mg(2+) as cofactor.

The catalysed reaction is (3R)-3-methyl-D-ornithine + L-lysine + ATP = (3R)-3-methyl-D-ornithyl-N(6)-L-lysine + ADP + phosphate + H(+). It functions in the pathway amino-acid biosynthesis; L-pyrrolysine biosynthesis. Functionally, is required for the biosynthesis of pyrrolysine. Catalyzes the ATP-dependent ligation between (3R)-3-methyl-D-ornithine and L-lysine, leading to (3R)-3-methyl-D-ornithyl-N6-L-lysine. This chain is 3-methyl-D-ornithine--L-lysine ligase, found in Methanosarcina barkeri (strain Fusaro / DSM 804).